Consider the following 300-residue polypeptide: MTLSREAATQFAKVLSEALPYIRRFVGKTLVIKYGGNAMESEELKTGFARDIVLMKAVGINPVVVHGGGPQIGDLLKRLNIESHFIDGMRVTDSQTMDVVEMVLGGQVNKSIVSLINQHGGSAIGLTGKDAGLIRARKLKATRQTPEMTKPEIIDIGHVGEVTGVNAELLEMLVQGNFIPVIAPIGVGENGESYNINADLVAGKVAEALKAEKLMLLTNIAGLMDKQGNVLTGLSTAQVDALIADGTIYGGMLPKIRCALEAVQGGVNSAHIIDGRVPNAVLLEIFTDVGVGTLITNSQR.

Residues Gly68 to Gly69, Arg90, and Asn195 each bind substrate.

The protein belongs to the acetylglutamate kinase family. ArgB subfamily.

It is found in the cytoplasm. The enzyme catalyses N-acetyl-L-glutamate + ATP = N-acetyl-L-glutamyl 5-phosphate + ADP. It participates in amino-acid biosynthesis; L-arginine biosynthesis; N(2)-acetyl-L-ornithine from L-glutamate: step 2/4. Functionally, catalyzes the ATP-dependent phosphorylation of N-acetyl-L-glutamate. The protein is Acetylglutamate kinase of Stutzerimonas stutzeri (strain A1501) (Pseudomonas stutzeri).